A 1090-amino-acid polypeptide reads, in one-letter code: MSSGLVLENTARRDALIAIEKKYQKIWAEEHQFEIDAPSIEDEPITMDSEELHRTYPKFMSSMAYPYMNGVMHAGHCFTLSKVEFSIGFERMNGKRALFPLGFHCTGMPILACADKLKREAELFGKNFDNVPAEEEEIKEETPAEKDHEDVTKFKAKKSKAAAKKGRGKYQFEIMLQLGIPREEIIKFADAKYWLTYFPPLCESDCTSLGARIDWRRSFVTTDANPYYDAFIRWQMNKLKAAGKIKFGERYTIYSEKDGQACMDHDRQSGEGVTPQEYIGVKIEALEFADDAAKIIDSSSDLDKSKKFYFVAATLRPETMYGQTCCFVSPTIEYGIFDAGDSYFITTERAFKNMSYQKLTPKRGFYKPIVTVPGKAFIGTKIHAPQSVYPELRILPMETVIATKGTGVVTCVPSNSPDDYITTKDLLHKPEYYGIKPEWIDHEIVPIMHTEKYGDLTAKAIVEEKKIQSPKDKNLLAEAKKIAYKEDYYTGTMIYGPYKGEKVEQAKNKVKADMIAAGEAFVYNEPESQVMSRSGDDCIVSLEDQWYVDYGEESWKKQAIECLEGMQLFAPEVKNAFEGVLDWLKNWAVCRTYGLGTRLPWDEKYLVESLSDSTIYQSFYTIAHLLFKDYYGNEIGPLGISADQMTDEVFDYIFQHQDDVKNTNIPLPALQKLRREFEYFYPLDVSISGKDLIPNHLTFFIYTHVALFPKKFWPKGIRANGHLMLNNSKMSKSTGNFMTLEQTVEKFGADAARIAFADAGDTVEDANFDESNANAAILRLFNLKEWAEEITKESNLRTGEITDFFDIAFEHEMNALIEKTYEQYALTNYKNALKYGLFDFQAARDYYREASGVMHKDLIARYIETQALLLAPIAPHFAEYIYREVLGNQTSVQNAKFPRASKPVDKGVLAALDYLRNLQRSIREGEGQALKKKKGKSAEIDASKPVKLTLLISESFPEWQSQCVEIVRKLFSEQTLDDNKKVREHIEPKEMKRAMPFISLLKQRLANEKPEDVFERELQFSEIDTVKAAARNVKKAAQALKIAEFSAISFPYGAKTGKDIFTGEEVEIPPVTKIVENAVPGNPGVVFQNI.

Position 2 is an N-acetylserine (S2). Residues 66–76 carry the 'HIGH' region motif; sequence PYMNGVMHAGH. Residue T142 is modified to Phosphothreonine. Residues 729–733 carry the 'KMSKS' region motif; the sequence is KMSKS. K732 is an ATP binding site.

Belongs to the class-I aminoacyl-tRNA synthetase family.

The protein localises to the cytoplasm. The catalysed reaction is tRNA(Leu) + L-leucine + ATP = L-leucyl-tRNA(Leu) + AMP + diphosphate. The polypeptide is Leucine--tRNA ligase, cytoplasmic (CDC60) (Saccharomyces cerevisiae (strain ATCC 204508 / S288c) (Baker's yeast)).